The following is a 247-amino-acid chain: Sugar fermentation stimulation protein homolog (247 aa).

Belongs to the SfsA family.

The sequence is that of Sugar fermentation stimulation protein homolog from Aeromonas hydrophila subsp. hydrophila (strain ATCC 7966 / DSM 30187 / BCRC 13018 / CCUG 14551 / JCM 1027 / KCTC 2358 / NCIMB 9240 / NCTC 8049).